The chain runs to 203 residues: Holliday junction branch migration complex subunit RuvA (203 aa).

The segment at 1 to 63 is domain I; it reads MIGKLSGKVD…EEHMHLYGFL (63 aa). Residues 64-142 form a domain II region; sequence TLEEKIFFNL…KISSGSAIIK (79 aa). The tract at residues 143–149 is flexible linker; the sequence is ESLNIKN. The interval 150-203 is domain III; it reads ITPVASNEVIKALVNLGFSRFEAQNAVQGIITQNPEISIDELIKTALKNRNSNF.

It belongs to the RuvA family. In terms of assembly, homotetramer. Forms an RuvA(8)-RuvB(12)-Holliday junction (HJ) complex. HJ DNA is sandwiched between 2 RuvA tetramers; dsDNA enters through RuvA and exits via RuvB. An RuvB hexamer assembles on each DNA strand where it exits the tetramer. Each RuvB hexamer is contacted by two RuvA subunits (via domain III) on 2 adjacent RuvB subunits; this complex drives branch migration. In the full resolvosome a probable DNA-RuvA(4)-RuvB(12)-RuvC(2) complex forms which resolves the HJ.

The protein resides in the cytoplasm. Functionally, the RuvA-RuvB-RuvC complex processes Holliday junction (HJ) DNA during genetic recombination and DNA repair, while the RuvA-RuvB complex plays an important role in the rescue of blocked DNA replication forks via replication fork reversal (RFR). RuvA specifically binds to HJ cruciform DNA, conferring on it an open structure. The RuvB hexamer acts as an ATP-dependent pump, pulling dsDNA into and through the RuvAB complex. HJ branch migration allows RuvC to scan DNA until it finds its consensus sequence, where it cleaves and resolves the cruciform DNA. The polypeptide is Holliday junction branch migration complex subunit RuvA (Rickettsia peacockii (strain Rustic)).